The primary structure comprises 447 residues: Cytochrome P450 BJ-4 homolog (447 aa).

Cysteine 392 is a binding site for heme.

It belongs to the cytochrome P450 family. Heme serves as cofactor.

Its function is as follows. Cytochromes P450 are a group of heme-thiolate monooxygenases. They oxidize a variety of structurally unrelated compounds, including steroids, fatty acids, and xenobiotics. This is Cytochrome P450 BJ-4 homolog (cyp117A2) from Sinorhizobium fredii (strain NBRC 101917 / NGR234).